The chain runs to 368 residues: Chaperone protein DnaJ (368 aa).

The 71-residue stretch at 5 to 75 folds into the J domain; it reads DFYKILGVEK…TKRKQYDKFG (71 aa). Residues 139–222 form a CR-type zinc finger; that stretch reads GKEISQKLTK…CRGKTIVETK (84 aa). Zn(2+) is bound by residues C152, C155, C169, C172, C196, C199, C210, and C213. CXXCXGXG motif repeat units lie at residues 152–159, 169–176, 196–203, and 210–217; these read CDNCKGSG, CYNCQGRG, CSVCLGSG, and CKKCRGKT.

The protein belongs to the DnaJ family. As to quaternary structure, homodimer. Requires Zn(2+) as cofactor.

It is found in the cytoplasm. Participates actively in the response to hyperosmotic and heat shock by preventing the aggregation of stress-denatured proteins and by disaggregating proteins, also in an autonomous, DnaK-independent fashion. Unfolded proteins bind initially to DnaJ; upon interaction with the DnaJ-bound protein, DnaK hydrolyzes its bound ATP, resulting in the formation of a stable complex. GrpE releases ADP from DnaK; ATP binding to DnaK triggers the release of the substrate protein, thus completing the reaction cycle. Several rounds of ATP-dependent interactions between DnaJ, DnaK and GrpE are required for fully efficient folding. Also involved, together with DnaK and GrpE, in the DNA replication of plasmids through activation of initiation proteins. The polypeptide is Chaperone protein DnaJ (Mesomycoplasma hyopneumoniae (strain 232) (Mycoplasma hyopneumoniae)).